Reading from the N-terminus, the 163-residue chain is Crossover junction endodeoxyribonuclease RuvC (163 aa).

Catalysis depends on residues aspartate 9, glutamate 76, and aspartate 148. Aspartate 9, glutamate 76, and aspartate 148 together coordinate Mg(2+).

This sequence belongs to the RuvC family. As to quaternary structure, homodimer which binds Holliday junction (HJ) DNA. The HJ becomes 2-fold symmetrical on binding to RuvC with unstacked arms; it has a different conformation from HJ DNA in complex with RuvA. In the full resolvosome a probable DNA-RuvA(4)-RuvB(12)-RuvC(2) complex forms which resolves the HJ. The cofactor is Mg(2+).

The protein localises to the cytoplasm. It carries out the reaction Endonucleolytic cleavage at a junction such as a reciprocal single-stranded crossover between two homologous DNA duplexes (Holliday junction).. The RuvA-RuvB-RuvC complex processes Holliday junction (HJ) DNA during genetic recombination and DNA repair. Endonuclease that resolves HJ intermediates. Cleaves cruciform DNA by making single-stranded nicks across the HJ at symmetrical positions within the homologous arms, yielding a 5'-phosphate and a 3'-hydroxyl group; requires a central core of homology in the junction. The consensus cleavage sequence is 5'-(A/T)TT(C/G)-3'. Cleavage occurs on the 3'-side of the TT dinucleotide at the point of strand exchange. HJ branch migration catalyzed by RuvA-RuvB allows RuvC to scan DNA until it finds its consensus sequence, where it cleaves and resolves the cruciform DNA. In Nostoc sp. (strain PCC 7120 / SAG 25.82 / UTEX 2576), this protein is Crossover junction endodeoxyribonuclease RuvC.